The primary structure comprises 202 residues: Imidazoleglycerol-phosphate dehydratase (202 aa).

Belongs to the imidazoleglycerol-phosphate dehydratase family.

The protein localises to the cytoplasm. It catalyses the reaction D-erythro-1-(imidazol-4-yl)glycerol 3-phosphate = 3-(imidazol-4-yl)-2-oxopropyl phosphate + H2O. It functions in the pathway amino-acid biosynthesis; L-histidine biosynthesis; L-histidine from 5-phospho-alpha-D-ribose 1-diphosphate: step 6/9. This chain is Imidazoleglycerol-phosphate dehydratase, found in Nocardioides sp. (strain ATCC BAA-499 / JS614).